Consider the following 1803-residue polypeptide: 6-methylsalicylic acid synthase (1803 aa).

Positions 1 to 40 (MEVHGDEVLSVDSGVSTPPSTGSGFRRPLETPGTEIGNLN) are disordered. A compositionally biased stretch (low complexity) spans 13-24 (SGVSTPPSTGSG). The Ketosynthase family 3 (KS3) domain maps to 44–470 (QNEVAVVGMA…GTVSHAIIEE (427 aa)). Residues cysteine 216, histidine 351, and histidine 391 each act as for beta-ketoacyl synthase activity in the active site. Positions 581 to 894 (VWVFSGHGAQ…SIAQLHCRGA (314 aa)) constitute a Malonyl-CoA:ACP transacylase (MAT) domain. Serine 667 (for malonyltransferase activity) is an active-site residue. Residues 940–1058 (HTLLGQRVPV…GQWEAGGSKN (119 aa)) form an N-terminal hotdog fold region. The PKS/mFAS DH domain occupies 940-1218 (HTLLGQRVPV…FSEIEGTPGS (279 aa)). Histidine 972 acts as the Proton acceptor; for thioesterase activity in catalysis. Residues 1073 to 1218 (ANNKLADNFS…FSEIEGTPGS (146 aa)) are C-terminal hotdog fold. Aspartate 1129 serves as the catalytic Proton donor; for thioesterase activity. The tract at residues 1141-1262 (TSVGSTLFFD…KNVADLYCGS (122 aa)) is required for homotetramer formation. In terms of domain architecture, Ketoreductase (KR) spans 1434–1628 (STYLITGGLG…AVAVQWTSWR (195 aa)). Positions 1701-1710 (ASSADAPSAA) are enriched in low complexity. The segment at 1701–1721 (ASSADAPSAAPKETNEMPESI) is disordered. One can recognise a Carrier domain in the interval 1726–1801 (TWLDERIRDC…HLVGWFLEKM (76 aa)). Serine 1761 bears the O-(pantetheine 4'-phosphoryl)serine mark. The interval 1783-1803 (LTWSCPTVSHLVGWFLEKMGN) is required for catalytic activity.

As to quaternary structure, homotetramer.

The catalysed reaction is 3 malonyl-CoA + acetyl-CoA + NADPH + 3 H(+) = 6-methylsalicylate + 3 CO2 + NADP(+) + 4 CoA + H2O. Its pathway is secondary metabolite biosynthesis. Functionally, 6-methylsalicylic acid synthase; part of the gene cluster that mediates the biosynthesis of terreic acid, a quinone epoxide inhibitor of Bruton's tyrosine kinase. The first step of the pathway is the synthesis of 6-methylsalicylic acid (6-MSA) by the 6-methylsalicylic acid synthase atX. In the biosynthesis of 6-MSA, atX utilizes one acetyl-CoA and three malonyl-CoAs as its substrates and catalyzes a series of programmed reactions including Claisen condensation, reduction, aldol cyclization, and the hydrolytic cleavage that yields 6-MSA. The 6-methylsalicylate 1-monooxygenase atA then catalyzes the decarboxylative hydroxylation of 6-MSA to 3-methylcatechol. The next step is the conversion of 3-methylcatechol to 3-methyl-1,2,4-benzenetriol by cytochrome P450 monooxygenase atE, which is enhanced by cytochrome P450 monooxygenase atG. Then, the epoxidase atD catalyzes the epoxidation and hydroxyl oxidation of 3-methyl-1,2,4-benzenetriol to terremutin. Lastly, GMC oxidoreductase atC oxidizes terremutin to terreic acid. The sequence is that of 6-methylsalicylic acid synthase from Aspergillus terreus (strain NIH 2624 / FGSC A1156).